Here is a 416-residue protein sequence, read N- to C-terminus: Phosphoglycerate kinase (416 aa).

Residues Val23, Asp24, Phe25, Asn26, Asn38, Arg39, Ser62, His63, Gly65, Arg66, Leu121, Arg122, His169, and Arg170 each contribute to the (2R)-3-phosphoglycerate site. Gly213 contacts ADP. Gly213 provides a ligand contact to CDP. AMP is bound by residues Ala214 and Lys215. ATP-binding residues include Ala214 and Lys215. Ala214 contacts Mg(2+). Asp218 provides a ligand contact to CDP. A Mg(2+)-binding site is contributed by Asp218. Residue Lys219 participates in AMP binding. Residue Lys219 participates in ATP binding. Gly237 provides a ligand contact to ADP. Gly237 contributes to the CDP binding site. The AMP site is built by Gly238 and Gly312. Residues Gly238 and Gly312 each coordinate ATP. Residues Gly337 and Phe342 each contribute to the CDP site. Residue Phe342 participates in ADP binding. Position 343 (Glu343) interacts with AMP. Asp374 is a Mg(2+) binding site. Thr375 provides a ligand contact to ATP.

This sequence belongs to the phosphoglycerate kinase family. In terms of assembly, monomer. Mg(2+) is required as a cofactor.

It carries out the reaction (2R)-3-phosphoglycerate + ATP = (2R)-3-phospho-glyceroyl phosphate + ADP. It functions in the pathway carbohydrate degradation; glycolysis; pyruvate from D-glyceraldehyde 3-phosphate: step 2/5. This chain is Phosphoglycerate kinase (PGK), found in Plasmodium falciparum (isolate 3D7).